The chain runs to 480 residues: Zinc finger protein ztf-6 (480 aa).

Disordered regions lie at residues 92–160 (CHDS…TMMV), 174–198 (GTNG…EEHD), 282–307 (LDAG…PTAS), and 328–351 (DANT…MKVP). Composition is skewed to low complexity over residues 95 to 105 (SATSTTTTVSH), 131 to 145 (SSIE…SSSV), 174 to 187 (GTNG…TSSS), and 286 to 296 (SSENDGSTSSS). C2H2-type zinc fingers lie at residues 359 to 383 (YICP…FVTH) and 388 to 410 (FNCD…QKIH). The C2H2-type 3; degenerate zinc-finger motif lies at 416-441 (YQCRGCGTNYTTQNGLRLHRQRNPAC). Residues 461 to 480 (ALSGPLSKNSSPTKQMVSAP) form a disordered region.

Its function is as follows. Probable transcription factor, involved in regulation of dopamine neuron lineage specification. May play a role in maintaining robustness of the Wnt/beta-catenin asymmetry pathway. The polypeptide is Zinc finger protein ztf-6 (Caenorhabditis elegans).